We begin with the raw amino-acid sequence, 852 residues long: Leucine--tRNA ligase (852 aa).

A 'HIGH' region motif is present at residues 51–61 (PYPSGDLHMGH). Residues 615 to 619 (KMSKS) carry the 'KMSKS' region motif. ATP is bound at residue lysine 618.

The protein belongs to the class-I aminoacyl-tRNA synthetase family.

The protein localises to the cytoplasm. The catalysed reaction is tRNA(Leu) + L-leucine + ATP = L-leucyl-tRNA(Leu) + AMP + diphosphate. The polypeptide is Leucine--tRNA ligase (Clavibacter sepedonicus (Clavibacter michiganensis subsp. sepedonicus)).